The chain runs to 452 residues: MSQRKYFGTDGVRGEVGGPVINAAFALRLGYAAGRVLAREHREHASGRGRNRPQVVIGKDTRISGYMLESALEAGLSAAGIDVLLAGPVPTPAVAYLTRTLRLAAGIVISASHNPYQDNGIKFFSAHGMKLPDDIEAAIEQAVDEPLGCVGSEELGRARRMADAQGRYIEFCKSTFPHDLDLNGLKLVVDAAHGAAYNVAPHVFRELGAEVHAIGVSPDGFNINKGVGALHPESLAEEVRARGADLGIALDGDADRLQMVDGTGRIYNGDELLYAIVRERMQRGPVAGVVGTLMTNYGLERQLQQIGVGFERANVGDRYVLEQMQARGWLYGGESSGHLLCLDCHTTGDGTIAALQVLTALRRADATLAEWVADLRMYPQRMINVPLAPGLDWKTHDGLARARGAVEAELAGRGRVLIRASGTEPKLRLMVEAEDEALAQASAQKLADSLGA.

Catalysis depends on serine 112, which acts as the Phosphoserine intermediate. Mg(2+) contacts are provided by serine 112, aspartate 251, aspartate 253, and aspartate 255. Serine 112 carries the phosphoserine modification.

The protein belongs to the phosphohexose mutase family. Mg(2+) is required as a cofactor. Post-translationally, activated by phosphorylation.

The catalysed reaction is alpha-D-glucosamine 1-phosphate = D-glucosamine 6-phosphate. Its function is as follows. Catalyzes the conversion of glucosamine-6-phosphate to glucosamine-1-phosphate. This chain is Phosphoglucosamine mutase, found in Bordetella pertussis (strain Tohama I / ATCC BAA-589 / NCTC 13251).